Reading from the N-terminus, the 221-residue chain is Cysteine-rich venom protein (221 aa).

A signal peptide is located at residue glycine 1. The SCP domain maps to aspartate 21 to tyrosine 148. Cystine bridges form between cysteine 57–cysteine 135, cysteine 74–cysteine 149, cysteine 130–cysteine 146, cysteine 168–cysteine 175, cysteine 171–cysteine 180, cysteine 184–cysteine 216, cysteine 193–cysteine 210, and cysteine 201–cysteine 214. The ShKT domain maps to cysteine 184–cysteine 216.

Belongs to the CRISP family. As to expression, expressed by the venom gland.

It is found in the secreted. Functionally, blocks contraction of smooth muscle elicited by high potassium-induced depolarization, but does not block caffeine-stimulated contraction. May target voltage-gated calcium channels in smooth muscle. The polypeptide is Cysteine-rich venom protein (Vipera nikolskii (Nikolsky's adder)).